The sequence spans 457 residues: Cystathionine beta-lyase, chloroplastic (457 aa).

The transit peptide at Met-1–Cys-51 directs the protein to the chloroplast. Positions 120, 122, 150, 151, 268, and 270 each coordinate pyridoxal 5'-phosphate. Lys-271 is subject to N6-(pyridoxal phosphate)lysine.

This sequence belongs to the trans-sulfuration enzymes family. As to quaternary structure, forms homodimers. May form homotetramers from two homodimers. It depends on pyridoxal 5'-phosphate as a cofactor.

It localises to the plastid. The protein resides in the chloroplast. The catalysed reaction is L,L-cystathionine + H2O = L-homocysteine + pyruvate + NH4(+). It carries out the reaction an S-substituted L-cysteine + H2O = a thiol + pyruvate + NH4(+). Catalyzes the degradation of cystathionine. The polypeptide is Cystathionine beta-lyase, chloroplastic (Mimosa pudica (Sensitive plant)).